Here is a 314-residue protein sequence, read N- to C-terminus: Acetyl-coenzyme A carboxylase carboxyl transferase subunit beta, chloroplastic (314 aa).

A CoA carboxyltransferase N-terminal domain is found at 47–314; that stretch reads LWTRCDNCEN…APWKEKNNQV (268 aa). Zn(2+)-binding residues include C51, C54, C70, and C73. Residues 51-73 form a C4-type zinc finger; it reads CDNCENMLYIKFLKQNKGVCEEC.

This sequence belongs to the AccD/PCCB family. Acetyl-CoA carboxylase is a heterohexamer composed of biotin carboxyl carrier protein, biotin carboxylase and 2 subunits each of ACCase subunit alpha and ACCase plastid-coded subunit beta (accD). Requires Zn(2+) as cofactor.

The protein resides in the plastid. The protein localises to the chloroplast stroma. It carries out the reaction N(6)-carboxybiotinyl-L-lysyl-[protein] + acetyl-CoA = N(6)-biotinyl-L-lysyl-[protein] + malonyl-CoA. The protein operates within lipid metabolism; malonyl-CoA biosynthesis; malonyl-CoA from acetyl-CoA: step 1/1. Component of the acetyl coenzyme A carboxylase (ACC) complex. Biotin carboxylase (BC) catalyzes the carboxylation of biotin on its carrier protein (BCCP) and then the CO(2) group is transferred by the transcarboxylase to acetyl-CoA to form malonyl-CoA. The protein is Acetyl-coenzyme A carboxylase carboxyl transferase subunit beta, chloroplastic of Angiopteris lygodiifolia (Turnip fern).